Here is a 405-residue protein sequence, read N- to C-terminus: GTPase Obg (405 aa).

The region spanning 1–159 (MKFVDEVSIF…RDLKLELKVL (159 aa)) is the Obg domain. The disordered stretch occupies residues 127 to 148 (NTRFKSSTNRAPRQTTPGKPGD). The span at 129–143 (RFKSSTNRAPRQTTP) shows a compositional bias: polar residues. Positions 160–333 (ADVGLLGLPN…LSQAIMRYLD (174 aa)) constitute an OBG-type G domain. GTP-binding positions include 166–173 (GLPNAGKS), 191–195 (FTTLV), 213–216 (DIPG), 283–286 (NKAD), and 314–316 (SAL). Mg(2+) is bound by residues serine 173 and threonine 193. The tract at residues 373 to 405 (LRRAGVKSVEEADDDDFDDDDDDEGGAEIIYVR) is disordered. Over residues 383 to 398 (EADDDDFDDDDDDEGG) the composition is skewed to acidic residues.

The protein belongs to the TRAFAC class OBG-HflX-like GTPase superfamily. OBG GTPase family. In terms of assembly, monomer. Mg(2+) serves as cofactor.

Its subcellular location is the cytoplasm. Its function is as follows. An essential GTPase which binds GTP, GDP and possibly (p)ppGpp with moderate affinity, with high nucleotide exchange rates and a fairly low GTP hydrolysis rate. Plays a role in control of the cell cycle, stress response, ribosome biogenesis and in those bacteria that undergo differentiation, in morphogenesis control. The chain is GTPase Obg from Stutzerimonas stutzeri (strain A1501) (Pseudomonas stutzeri).